A 514-amino-acid polypeptide reads, in one-letter code: DNA damage-binding protein CMR1 (514 aa).

The interval 26–116 is disordered; it reads NLDSLSQSIK…VKQEEKEELS (91 aa). Basic and acidic residues predominate over residues 34–44; the sequence is IKRELPRASET. Positions 45–55 are enriched in basic residues; it reads KKRKTTPRTKA. Composition is skewed to basic and acidic residues over residues 56–65 and 92–116; these read VKKEDVEPSR and KFED…EELS. WD repeat units lie at residues 180-221, 229-269, 280-320, 327-367, 385-423, 438-481, and 483-514; these read ISHT…DDSE, PHGK…STEV, DYAL…KPLK, LHDK…KANA, SSRL…LIPD, GRWV…IAHL, and DSVG…YLFE.

This sequence belongs to the WD repeat DDB2/WDR76 family.

Functionally, DNA-binding protein that binds to both single- and double-stranded DNA. Binds preferentially to UV-damaged DNA. May be involved in DNA-metabolic processes. This chain is DNA damage-binding protein CMR1 (PRW1), found in Scheffersomyces stipitis (strain ATCC 58785 / CBS 6054 / NBRC 10063 / NRRL Y-11545) (Yeast).